The sequence spans 436 residues: Histidine--tRNA ligase 1 (436 aa).

Belongs to the class-II aminoacyl-tRNA synthetase family. In terms of assembly, homodimer.

Its subcellular location is the cytoplasm. The catalysed reaction is tRNA(His) + L-histidine + ATP = L-histidyl-tRNA(His) + AMP + diphosphate + H(+). This is Histidine--tRNA ligase 1 from Bacillus cereus (strain ATCC 10987 / NRS 248).